The sequence spans 203 residues: ATP phosphoribosyltransferase (203 aa).

It belongs to the ATP phosphoribosyltransferase family. Short subfamily. Heteromultimer composed of HisG and HisZ subunits.

The protein resides in the cytoplasm. It catalyses the reaction 1-(5-phospho-beta-D-ribosyl)-ATP + diphosphate = 5-phospho-alpha-D-ribose 1-diphosphate + ATP. It participates in amino-acid biosynthesis; L-histidine biosynthesis; L-histidine from 5-phospho-alpha-D-ribose 1-diphosphate: step 1/9. Functionally, catalyzes the condensation of ATP and 5-phosphoribose 1-diphosphate to form N'-(5'-phosphoribosyl)-ATP (PR-ATP). Has a crucial role in the pathway because the rate of histidine biosynthesis seems to be controlled primarily by regulation of HisG enzymatic activity. This Campylobacter fetus subsp. fetus (strain 82-40) protein is ATP phosphoribosyltransferase.